The sequence spans 100 residues: Probable DNA-binding protein HU (100 aa).

It belongs to the bacterial histone-like protein family.

In terms of biological role, histone-like DNA-binding protein which is capable of wrapping DNA to stabilize it, and thus to prevent its denaturation under extreme environmental conditions. The protein is Probable DNA-binding protein HU (hup) of Chlamydia muridarum (strain MoPn / Nigg).